Reading from the N-terminus, the 440-residue chain is Phosphoglucosamine mutase (440 aa).

The active-site Phosphoserine intermediate is Ser-97. 4 residues coordinate Mg(2+): Ser-97, Asp-237, Asp-239, and Asp-241. At Ser-97 the chain carries Phosphoserine.

This sequence belongs to the phosphohexose mutase family. It depends on Mg(2+) as a cofactor. Activated by phosphorylation.

It carries out the reaction alpha-D-glucosamine 1-phosphate = D-glucosamine 6-phosphate. In terms of biological role, catalyzes the conversion of glucosamine-6-phosphate to glucosamine-1-phosphate. The protein is Phosphoglucosamine mutase of Nautilia profundicola (strain ATCC BAA-1463 / DSM 18972 / AmH).